Reading from the N-terminus, the 260-residue chain is Imidazole glycerol phosphate synthase subunit HisF (260 aa).

Active-site residues include Asp11 and Asp130.

Belongs to the HisA/HisF family. In terms of assembly, heterodimer of HisH and HisF.

The protein localises to the cytoplasm. It catalyses the reaction 5-[(5-phospho-1-deoxy-D-ribulos-1-ylimino)methylamino]-1-(5-phospho-beta-D-ribosyl)imidazole-4-carboxamide + L-glutamine = D-erythro-1-(imidazol-4-yl)glycerol 3-phosphate + 5-amino-1-(5-phospho-beta-D-ribosyl)imidazole-4-carboxamide + L-glutamate + H(+). It functions in the pathway amino-acid biosynthesis; L-histidine biosynthesis; L-histidine from 5-phospho-alpha-D-ribose 1-diphosphate: step 5/9. Its function is as follows. IGPS catalyzes the conversion of PRFAR and glutamine to IGP, AICAR and glutamate. The HisF subunit catalyzes the cyclization activity that produces IGP and AICAR from PRFAR using the ammonia provided by the HisH subunit. The protein is Imidazole glycerol phosphate synthase subunit HisF of Caulobacter sp. (strain K31).